The following is a 367-amino-acid chain: Inactive serine protease 39 (367 aa).

Positions 1–31 are cleaved as a signal peptide; that stretch reads MWGSRAQQSGPDRGGACLLAAFLLCFSLLHA. Positions 68-312 constitute a Peptidase S1 domain; the sequence is IYGGQIAKAE…FSDWIKQKKA (245 aa). 4 cysteine pairs are disulfide-bonded: Cys-93–Cys-109, Cys-192–Cys-269, Cys-225–Cys-248, and Cys-259–Cys-287.

The protein belongs to the peptidase S1 family. As to expression, expressed in testis. More specifically, abundantly expressed in the haploid round spermatid.

The protein resides in the cytoplasmic vesicle. The protein localises to the secretory vesicle. It is found in the acrosome. Its subcellular location is the secreted. In terms of biological role, may play an important role in the sperm/egg interaction; released during the acrosome reaction. This is Inactive serine protease 39 (Prss39) from Mus musculus (Mouse).